Here is a 55-residue protein sequence, read N- to C-terminus: Large ribosomal subunit protein bL33 (55 aa).

It belongs to the bacterial ribosomal protein bL33 family.

The sequence is that of Large ribosomal subunit protein bL33 from Acidothermus cellulolyticus (strain ATCC 43068 / DSM 8971 / 11B).